The primary structure comprises 93 residues: MGRSLKKGPFVAGHLMEKIEKLNAQGSKQVIKTWSRASTIIPDMVGHTIAVHNGKQHVPVYVSEQMVGHKLGEFAPTRTFRGHAKSDKKAGRK.

Belongs to the universal ribosomal protein uS19 family.

Protein S19 forms a complex with S13 that binds strongly to the 16S ribosomal RNA. The polypeptide is Small ribosomal subunit protein uS19 (Microcystis aeruginosa (strain NIES-843 / IAM M-2473)).